Reading from the N-terminus, the 594-residue chain is Aspartate--tRNA(Asp/Asn) ligase (594 aa).

E175 is an L-aspartate binding site. The segment at Q199–K202 is aspartate. R221 contributes to the L-aspartate binding site. ATP contacts are provided by residues R221–E223 and Q230. H450 is a binding site for L-aspartate. E485 provides a ligand contact to ATP. An L-aspartate-binding site is contributed by R492. Position 537–540 (G537–R540) interacts with ATP.

Belongs to the class-II aminoacyl-tRNA synthetase family. Type 1 subfamily. Homodimer.

Its subcellular location is the cytoplasm. The catalysed reaction is tRNA(Asx) + L-aspartate + ATP = L-aspartyl-tRNA(Asx) + AMP + diphosphate. Its function is as follows. Aspartyl-tRNA synthetase with relaxed tRNA specificity since it is able to aspartylate not only its cognate tRNA(Asp) but also tRNA(Asn). Reaction proceeds in two steps: L-aspartate is first activated by ATP to form Asp-AMP and then transferred to the acceptor end of tRNA(Asp/Asn). This is Aspartate--tRNA(Asp/Asn) ligase from Herpetosiphon aurantiacus (strain ATCC 23779 / DSM 785 / 114-95).